A 210-amino-acid polypeptide reads, in one-letter code: Protoporphyrinogen IX oxidase (210 aa).

5 helical membrane passes run 22 to 42, 74 to 94, 103 to 123, 141 to 161, and 165 to 185; these read WFKAFHLIGIVVWFAGLFYLV, YNIITTPGMVVTVAMAIGLIF, GWLHIKLTFVALLLLYHFYCG, FRALNEAPTILLVVIVLLAVF, and LPLDATTWLIVALVIAMAASI. His27 provides a ligand contact to heme. Lys108 contributes to the heme binding site.

Belongs to the HemJ family. In terms of assembly, homodimer. Can also form higher oligomers, most probably tetramers. Interacts with Sll1106, however it is unlikely that Sll1106 is required for PPO function. It depends on heme b as a cofactor.

The protein resides in the cell membrane. It catalyses the reaction protoporphyrinogen IX + 3 A = protoporphyrin IX + 3 AH2. The protein operates within porphyrin-containing compound metabolism; protoporphyrin-IX biosynthesis; protoporphyrin-IX from protoporphyrinogen-IX: step 1/1. In terms of biological role, catalyzes the oxidation of protoporphyrinogen IX to protoporphyrin IX. Is involved in the biosynthesis of tetrapyrrole molecules like heme and chlorophyll. Does not use oxygen or artificial electron acceptors such as menadione or benzoquinone. Is functionally coupled with coproporphyrinogen III oxidase (CPO). Is essential for growth. In Synechocystis sp. (strain ATCC 27184 / PCC 6803 / Kazusa), this protein is Protoporphyrinogen IX oxidase.